Here is a 39-residue protein sequence, read N- to C-terminus: GAFIMPGTLWCGAGNAASDYSQLGTEKDTDMCCRDHDHC.

Histidine 36 is an active-site residue.

It belongs to the phospholipase A2 family. Group III subfamily. Ca(2+) serves as cofactor. In terms of tissue distribution, expressed by the venom gland.

Its subcellular location is the secreted. The enzyme catalyses a 1,2-diacyl-sn-glycero-3-phosphocholine + H2O = a 1-acyl-sn-glycero-3-phosphocholine + a fatty acid + H(+). PLA2 catalyzes the calcium-dependent hydrolysis of the 2-acyl groups in 3-sn-phosphoglycerides. This Heloderma horridum horridum (Mexican beaded lizard) protein is Phospholipase A2.